The sequence spans 189 residues: Interferon alpha-16 (189 aa).

Positions 1–23 (MALSFSLLMAVLVLSYKSICSLG) are cleaved as a signal peptide. Disulfide bonds link C24–C122 and C52–C162.

Belongs to the alpha/beta interferon family.

It localises to the secreted. Its function is as follows. Produced by macrophages, IFN-alpha have antiviral activities. Interferon stimulates the production of two enzymes: a protein kinase and an oligoadenylate synthetase. In Homo sapiens (Human), this protein is Interferon alpha-16 (IFNA16).